Consider the following 190-residue polypeptide: GTP cyclohydrolase 1 (190 aa).

The Zn(2+) site is built by Cys80, His83, and Cys151.

This sequence belongs to the GTP cyclohydrolase I family. Toroid-shaped homodecamer, composed of two pentamers of five dimers.

It carries out the reaction GTP + H2O = 7,8-dihydroneopterin 3'-triphosphate + formate + H(+). It participates in cofactor biosynthesis; 7,8-dihydroneopterin triphosphate biosynthesis; 7,8-dihydroneopterin triphosphate from GTP: step 1/1. This is GTP cyclohydrolase 1 (folE) from Rickettsia prowazekii (strain Madrid E).